Reading from the N-terminus, the 184-residue chain is Large ribosomal subunit protein eL14 (184 aa).

The disordered stretch occupies residues 149-184; it reads KNAKKVDSTPAAKKRIEKARAARKAKPTAAKEKSKK. A compositionally biased stretch (basic residues) spans 160–174; the sequence is AKKRIEKARAARKAK.

The protein belongs to the eukaryotic ribosomal protein eL14 family.

This is Large ribosomal subunit protein eL14 from Trypanosoma congolense.